A 390-amino-acid polypeptide reads, in one-letter code: Neuromedin-B receptor (390 aa).

Positions 1–20 (MPPRSLPNLSLPTEASESEL) are disordered. Residues 1 to 41 (MPPRSLPNLSLPTEASESELEPEVWENDFLPDSDGTTAELV) are Extracellular-facing. Asn-8 carries an N-linked (GlcNAc...) asparagine glycan. A helical membrane pass occupies residues 42–65 (IRCVIPSLYLIIISVGLLGNIMLV). Topologically, residues 66-79 (KIFLTNSTMRSVPN) are cytoplasmic. The helical transmembrane segment at 80–99 (IFISNLAAGDLLLLLTCVPV) threads the bilayer. The Extracellular segment spans residues 100–117 (DASRYFFDEWVFGKLGCK). Cys-116 and Cys-198 form a disulfide bridge. A helical membrane pass occupies residues 118–139 (LIPAIQLTSVGVSVFTLTALSA). At 140-156 (DRYRAIVNPMDMQTSGV) the chain is on the cytoplasmic side. The chain crosses the membrane as a helical span at residues 157–177 (VLWTSLKAVGIWVVSVLLAVP). At 178–211 (EAVFSEVARIGSSDNSSFTACIPYPQTDELHPKI) the chain is on the extracellular side. Asn-192 carries N-linked (GlcNAc...) asparagine glycosylation. Residues 212 to 235 (HSVLIFLVYFLIPLVIISIYYYHI) traverse the membrane as a helical segment. The Cytoplasmic portion of the chain corresponds to 236-266 (AKTLIRSAHNLPGEYNEHTKKQMETRKRLAK). A helical membrane pass occupies residues 267–287 (IVLVFVGCFVFCWFPNHILYL). Topologically, residues 288–299 (YRSFNYKEIDPS) are extracellular. A helical membrane pass occupies residues 300-327 (LGHMIVTLVARVLSFSNSCVNPFALYLL). Topologically, residues 328-390 (SESFRKHFNS…GHSTKQEIAL (63 aa)) are cytoplasmic. A lipid anchor (S-palmitoyl cysteine) is attached at Cys-341. Ser-352 is subject to Phosphoserine.

Belongs to the G-protein coupled receptor 1 family. As to expression, brain (olfactory bulb and central thalamic regions), and esophagus.

It is found in the cell membrane. Its function is as follows. Receptor for neuromedin-B. Contributes to the maintenance of basal sigh rate through signaling in the pre-Botzinger complex, a cluster of several thousand neurons in the ventrolateral medulla responsible for inspiration during respiratory activity. Contributes to the induction of sneezing following exposure to chemical irritants or allergens which causes release of NMB by nasal sensory neurons and activation of NMBR-expressing neurons in the sneeze-evoking region of the brainstem. These in turn activate neurons of the caudal ventral respiratory group, giving rise to the sneezing response. Contributes to induction of acute itch, possibly through its activation on dorsal root ganglion neurons by the NMB peptide. Plays a role in the innate immune response to influenza A virus infection by enhancing interferon alpha expression and reducing expression of IL6. Plays a role in CSF1-induced proliferation of osteoclast precursors by contributing to the positive regulation of the expression of the CSF1 receptor CSF1R. The protein is Neuromedin-B receptor (Nmbr) of Rattus norvegicus (Rat).